The following is a 31-amino-acid chain: Hyaluronidase (31 aa).

This sequence belongs to the glycosyl hydrolase 56 family. Post-translationally, contains 2 disulfide bonds. In terms of processing, N-glycosylated on at least two Asn residues by identical heptasaccharide units composed of Man, GlcNAc, and Fuc residues in the molar ration of 3:2:2. As to expression, expressed by the venom gland.

The protein localises to the secreted. The catalysed reaction is Random hydrolysis of (1-&gt;4)-linkages between N-acetyl-beta-D-glucosamine and D-glucuronate residues in hyaluronate.. Its function is as follows. Hydrolyzes high molecular weight hyaluronic acid to produce small oligosaccharides. The chain is Hyaluronidase from Vespula maculifrons (Eastern yellow jacket).